We begin with the raw amino-acid sequence, 2694 residues long: Teneurin-3 (2694 aa).

Disordered stretches follow at residues Met1–Glu45, Pro106–Ser132, and Thr161–Thr198. A Teneurin N-terminal domain is found at Met1–Cys306. Over Met1 to Met312 the chain is Cytoplasmic. Polar residues predominate over residues Pro163–Leu184. A helical membrane pass occupies residues Ala313 to Leu333. Residues Asn334–Arg2694 lie on the Extracellular side of the membrane. Residues Asn374 and Asn413 are each glycosylated (N-linked (GlcNAc...) asparagine). EGF-like domains are found at residues Thr508–Ser539, Arg540–Asp570, Pro572–Glu604, Glu605–Glu636, Leu638–Ser671, Ile672–Leu703, Lys704–Thr733, and Val734–Asp768. 22 cysteine pairs are disulfide-bonded: Cys512–Cys522, Cys516–Cys527, Cys529–Cys538, Cys547–Cys558, Cys560–Cys569, Cys576–Cys587, Cys581–Cys592, Cys594–Cys603, Cys608–Cys619, Cys613–Cys624, Cys626–Cys635, Cys646–Cys659, Cys661–Cys670, Cys675–Cys685, Cys679–Cys690, Cys692–Cys701, Cys706–Cys716, Cys710–Cys721, Cys723–Cys732, Cys737–Cys747, Cys741–Cys756, and Cys758–Cys767. A glycan (N-linked (GlcNAc...) asparagine) is linked at Asn664. N-linked (GlcNAc...) asparagine glycans are attached at residues Asn854, Asn877, and Asn1048. NHL repeat units follow at residues Leu1166–Phe1192, Ser1194–Leu1238, Ala1264–Ile1308, Cys1325–Asn1365, and Cys1452–Asn1495. A glycan (N-linked (GlcNAc...) asparagine) is linked at Asn1196. The stretch at Phe1505–His1524 is one YD 1 repeat. N-linked (GlcNAc...) asparagine glycosylation is found at Asn1521 and Asn1538. 3 YD repeats span residues Tyr1541–Arg1561, Tyr1604–Phe1623, and Tyr1624–Ile1646. Asn1634, Asn1671, Asn1729, and Asn1814 each carry an N-linked (GlcNAc...) asparagine glycan. YD repeat units follow at residues Tyr1817 to Glu1836, Tyr1858 to Asp1876, Tyr1877 to Gln1897, Tyr1904 to Asp1921, Tyr1922 to Lys1943, Tyr1944 to Ser1961, Tyr1964 to Ser1984, Tyr1987 to Val2007, Tyr2015 to Pro2034, Phe2040 to Tyr2057, Tyr2058 to Ile2084, Tyr2086 to Gln2099, Tyr2100 to Gly2123, Tyr2126 to Asn2146, Tyr2147 to Leu2167, Tyr2169 to Gly2189, Tyr2201 to Tyr2221, and Tyr2223 to Phe2243. Residue Asn1915 is glycosylated (N-linked (GlcNAc...) asparagine). A glycan (N-linked (GlcNAc...) asparagine) is linked at Asn2118. The N-linked (GlcNAc...) asparagine glycan is linked to Asn2258. The stretch at Tyr2269–Val2310 is one YD 23 repeat. N-linked (GlcNAc...) asparagine glycosylation occurs at Asn2571.

The protein belongs to the tenascin family. Teneurin subfamily. Homodimer; disulfide-linked; to mediate homophilic cell adhesion. As to expression, expressed by retinal ganglion cells and their presynaptic amacrine and postsynaptic tectal cell targets.

It localises to the cell membrane. Its subcellular location is the cell projection. It is found in the axon. In terms of biological role, involved in neural development by regulating the establishment of proper connectivity within the nervous system. Acts in both pre- and postsynaptic neurons in the hippocampus to control the assembly of a precise topographic projection: required in both CA1 and subicular neurons for the precise targeting of proximal CA1 axons to distal subiculum, probably by promoting homophilic cell adhesion. Required by retinal ganglion cells for acquisition of their correct morphological and functional connectivity, thereby playing a key role in the development of the visual pathway. The polypeptide is Teneurin-3 (tenm3) (Danio rerio (Zebrafish)).